The following is a 312-amino-acid chain: Protein phosphatase PTC7 homolog fig (312 aa).

A PPM-type phosphatase domain is found at 42–306 (IQGSSKDQLA…DDITVILASV (265 aa)). Mn(2+)-binding residues include aspartate 83, glycine 84, and aspartate 228.

This sequence belongs to the PP2C family. Mg(2+) serves as cofactor. Mn(2+) is required as a cofactor.

The enzyme catalyses O-phospho-L-seryl-[protein] + H2O = L-seryl-[protein] + phosphate. It carries out the reaction O-phospho-L-threonyl-[protein] + H2O = L-threonyl-[protein] + phosphate. In Drosophila mojavensis (Fruit fly), this protein is Protein phosphatase PTC7 homolog fig.